The primary structure comprises 492 residues: Glutamyl-tRNA(Gln) amidotransferase subunit A (492 aa).

Catalysis depends on charge relay system residues Lys78 and Ser158. Ser182 serves as the catalytic Acyl-ester intermediate.

Belongs to the amidase family. GatA subfamily. As to quaternary structure, heterotrimer of A, B and C subunits.

It catalyses the reaction L-glutamyl-tRNA(Gln) + L-glutamine + ATP + H2O = L-glutaminyl-tRNA(Gln) + L-glutamate + ADP + phosphate + H(+). Its function is as follows. Allows the formation of correctly charged Gln-tRNA(Gln) through the transamidation of misacylated Glu-tRNA(Gln) in organisms which lack glutaminyl-tRNA synthetase. The reaction takes place in the presence of glutamine and ATP through an activated gamma-phospho-Glu-tRNA(Gln). The sequence is that of Glutamyl-tRNA(Gln) amidotransferase subunit A from Rickettsia akari (strain Hartford).